Reading from the N-terminus, the 120-residue chain is Prefoldin subunit beta (120 aa).

This sequence belongs to the prefoldin subunit beta family. As to quaternary structure, heterohexamer of two alpha and four beta subunits.

The protein localises to the cytoplasm. Functionally, molecular chaperone capable of stabilizing a range of proteins. Seems to fulfill an ATP-independent, HSP70-like function in archaeal de novo protein folding. The sequence is that of Prefoldin subunit beta from Methanospirillum hungatei JF-1 (strain ATCC 27890 / DSM 864 / NBRC 100397 / JF-1).